The primary structure comprises 139 residues: Cytochrome c2 (139 aa).

The N-terminal stretch at 1 to 25 (MVKKLLTILSIAATAGSLSIGTASA) is a signal peptide. Gln-26 bears the Pyrrolidone carboxylic acid mark. Heme c contacts are provided by Cys-38, Cys-41, His-42, and Met-118.

Belongs to the cytochrome c family. Post-translationally, binds 1 heme c group covalently per subunit.

Its function is as follows. Cytochrome c2 is found mainly in purple, non-sulfur, photosynthetic bacteria where it functions as the electron donor to the oxidized bacteriochlorophyll in the photophosphorylation pathway. However, it may also have a role in the respiratory chain and is found in some non-photosynthetic bacteria. The sequence is that of Cytochrome c2 (cycA) from Rhodopseudomonas palustris (strain ATCC BAA-98 / CGA009).